A 367-amino-acid polypeptide reads, in one-letter code: tRNA-specific 2-thiouridylase MnmA (367 aa).

Residues 9 to 16 (LMSGGVDS) and phenylalanine 35 each bind ATP. Catalysis depends on cysteine 107, which acts as the Nucleophile. The cysteines at positions 107 and 205 are disulfide-linked. Glycine 131 serves as a coordination point for ATP. The tract at residues 155–157 (KDQ) is interaction with tRNA. Cysteine 205 (cysteine persulfide intermediate) is an active-site residue.

This sequence belongs to the MnmA/TRMU family.

Its subcellular location is the cytoplasm. The enzyme catalyses S-sulfanyl-L-cysteinyl-[protein] + uridine(34) in tRNA + AH2 + ATP = 2-thiouridine(34) in tRNA + L-cysteinyl-[protein] + A + AMP + diphosphate + H(+). Functionally, catalyzes the 2-thiolation of uridine at the wobble position (U34) of tRNA, leading to the formation of s(2)U34. The sequence is that of tRNA-specific 2-thiouridylase MnmA from Petrotoga mobilis (strain DSM 10674 / SJ95).